The following is a 142-amino-acid chain: Large ribosomal subunit protein uL13 (142 aa).

The protein belongs to the universal ribosomal protein uL13 family. As to quaternary structure, part of the 50S ribosomal subunit.

In terms of biological role, this protein is one of the early assembly proteins of the 50S ribosomal subunit, although it is not seen to bind rRNA by itself. It is important during the early stages of 50S assembly. This Pasteurella multocida (strain Pm70) protein is Large ribosomal subunit protein uL13.